The primary structure comprises 37 residues: Large ribosomal subunit protein bL36c (37 aa).

It belongs to the bacterial ribosomal protein bL36 family.

The protein localises to the plastid. The protein resides in the chloroplast. This chain is Large ribosomal subunit protein bL36c, found in Lactuca sativa (Garden lettuce).